The following is a 530-amino-acid chain: Bifunctional purine biosynthesis protein PurH (530 aa).

Residues 1–148 (MNNARPIRRA…KNHKDVTIVV (148 aa)) enclose the MGS-like domain.

This sequence belongs to the PurH family.

It carries out the reaction (6R)-10-formyltetrahydrofolate + 5-amino-1-(5-phospho-beta-D-ribosyl)imidazole-4-carboxamide = 5-formamido-1-(5-phospho-D-ribosyl)imidazole-4-carboxamide + (6S)-5,6,7,8-tetrahydrofolate. The catalysed reaction is IMP + H2O = 5-formamido-1-(5-phospho-D-ribosyl)imidazole-4-carboxamide. It functions in the pathway purine metabolism; IMP biosynthesis via de novo pathway; 5-formamido-1-(5-phospho-D-ribosyl)imidazole-4-carboxamide from 5-amino-1-(5-phospho-D-ribosyl)imidazole-4-carboxamide (10-formyl THF route): step 1/1. The protein operates within purine metabolism; IMP biosynthesis via de novo pathway; IMP from 5-formamido-1-(5-phospho-D-ribosyl)imidazole-4-carboxamide: step 1/1. This Vibrio vulnificus (strain YJ016) protein is Bifunctional purine biosynthesis protein PurH.